Reading from the N-terminus, the 311-residue chain is Putative ribose-phosphate pyrophosphokinase 2 (311 aa).

Residues 38-40 (DGE) and 97-98 (RQ) each bind ATP. Mg(2+)-binding residues include His-131 and Asp-171. A D-ribose 5-phosphate-binding site is contributed by Asp-219.

It belongs to the ribose-phosphate pyrophosphokinase family. Class I subfamily. In terms of assembly, homohexamer. The cofactor is Mg(2+).

The protein localises to the cytoplasm. The enzyme catalyses D-ribose 5-phosphate + ATP = 5-phospho-alpha-D-ribose 1-diphosphate + AMP + H(+). The protein operates within metabolic intermediate biosynthesis; 5-phospho-alpha-D-ribose 1-diphosphate biosynthesis; 5-phospho-alpha-D-ribose 1-diphosphate from D-ribose 5-phosphate (route I): step 1/1. In terms of biological role, involved in the biosynthesis of the central metabolite phospho-alpha-D-ribosyl-1-pyrophosphate (PRPP) via the transfer of pyrophosphoryl group from ATP to 1-hydroxyl of ribose-5-phosphate (Rib-5-P). The polypeptide is Putative ribose-phosphate pyrophosphokinase 2 (Listeria innocua serovar 6a (strain ATCC BAA-680 / CLIP 11262)).